The primary structure comprises 539 residues: G protein-coupled receptor associated sorting protein 3 (539 aa).

Residues 1–10 (MTGSKNKARA) are compositionally biased toward basic residues. Disordered stretches follow at residues 1–111 (MTGS…DSWF) and 132–170 (NSVA…EEEE). 2 stretches are compositionally biased toward basic and acidic residues: residues 66–80 (VVAE…ESKA) and 88–106 (FNHK…DKPS). The segment covering 132–146 (NSVAKCENKPSTSIQ) has biased composition (polar residues).

Belongs to the GPRASP family. As to quaternary structure, homodimer.

Its subcellular location is the cytoplasm. It is found in the nucleus. In terms of biological role, survival and differentiation promoting protein that plays a role in the regulation of neurosynaptogenesis. Induces phosphatase PP2A activity which results in APP dephosphorylation and inhibits BACE1-mediated processing of APP. The sequence is that of G protein-coupled receptor associated sorting protein 3 (Gprasp3) from Rattus norvegicus (Rat).